A 918-amino-acid chain; its full sequence is Pre-pro-metalloprotease PrtV (918 aa).

The N-terminal stretch at 1-23 (MKTIKKTLLAAAIASFFSSGLYA) is a signal peptide. Residues 24-105 (QTPIDLGVVN…QKGPHKARVF (82 aa)) constitute a propeptide that is removed on maturation. A Zn(2+)-binding site is contributed by His330. The active site involves Glu331. Residue His334 coordinates Zn(2+). 4 residues coordinate Ca(2+): Ile757, Asp782, Asp821, and Asp825. PKD domains lie at 758 to 835 (APVA…TIKV) and 855 to 918 (VTMW…KVKL). Positions 835–918 (VDTPNALPQA…VTTITIKVKL (84 aa)) are excised as a propeptide.

The protein belongs to the peptidase M6 family. It depends on Zn(2+) as a cofactor. PrtV is expressed as an inactive, multidomain, 102 kDa pre-pro-metalloprotease. To form a catalytically active protease, PrtV is first secreted, and then it undergoes N- and C-terminal cleavages during envelope translocation to yield a 81 kDa pro-metalloprotease. Outside the cell, the 81 kDa pro-metalloprotease undergoes an auto-cleavage. The two major products of autoproteolysis (37 kDa and 18 kDa) together form the so called 55 kDa active complex.

It localises to the secreted. Calcium plays an important structural role, providing stability to this protein in the cytoplasm. Outside the cell, the decrease of the calcium concentration triggers the autoproteolysis. PrtV activity is increased by 25 mM of Sr(2+) or Mg(2+) and to some extent by Ba(2+); however, Ba(2+) inhibits PrtV at higher concentrations. Completely inhibited by EDTA and 1,10-phenanthroline. Metalloprotease that exhibits a cytotoxic effect leading to cell death. In host tissues, it could play a role in pathogenesis by modulating the stability of the extracellular matrix components such as fibronectin and fibrinogen. Also able to cleave plasminogen. The protein is Pre-pro-metalloprotease PrtV of Vibrio cholerae serotype O1 (strain ATCC 39315 / El Tor Inaba N16961).